The primary structure comprises 557 residues: Urocanate hydratase (557 aa).

Residues 1–20 (MSNPRHNEREVRSPRGDELN) are disordered. Residues 52–53 (GG), Gln-130, 176–178 (GMG), Glu-196, Arg-201, 242–243 (NA), 263–267 (QTSAH), 273–274 (YL), and Tyr-322 each bind NAD(+). Cys-410 is a catalytic residue. Position 492 (Gly-492) interacts with NAD(+).

Belongs to the urocanase family. The cofactor is NAD(+).

The protein resides in the cytoplasm. The enzyme catalyses 4-imidazolone-5-propanoate = trans-urocanate + H2O. It participates in amino-acid degradation; L-histidine degradation into L-glutamate; N-formimidoyl-L-glutamate from L-histidine: step 2/3. Functionally, catalyzes the conversion of urocanate to 4-imidazolone-5-propionate. This chain is Urocanate hydratase, found in Brucella abortus (strain S19).